Consider the following 503-residue polypeptide: ATP synthase subunit alpha (503 aa).

170–177 (GDKQTGKT) lines the ATP pocket.

It belongs to the ATPase alpha/beta chains family. In terms of assembly, F-type ATPases have 2 components, CF(1) - the catalytic core - and CF(0) - the membrane proton channel. CF(1) has five subunits: alpha(3), beta(3), gamma(1), delta(1), epsilon(1). CF(0) has three main subunits: a(1), b(2) and c(9-12). The alpha and beta chains form an alternating ring which encloses part of the gamma chain. CF(1) is attached to CF(0) by a central stalk formed by the gamma and epsilon chains, while a peripheral stalk is formed by the delta and b chains.

It localises to the cell inner membrane. It catalyses the reaction ATP + H2O + 4 H(+)(in) = ADP + phosphate + 5 H(+)(out). Produces ATP from ADP in the presence of a proton gradient across the membrane. The alpha chain is a regulatory subunit. The polypeptide is ATP synthase subunit alpha (Helicobacter pylori (strain P12)).